The primary structure comprises 401 residues: Phosphoglycerate kinase (401 aa).

Substrate-binding positions include 29–31 (DFN), arginine 45, 69–72 (HLGR), arginine 125, and arginine 158. ATP-binding positions include lysine 209, glutamate 331, and 357-360 (GGDT).

It belongs to the phosphoglycerate kinase family. In terms of assembly, monomer.

Its subcellular location is the cytoplasm. The catalysed reaction is (2R)-3-phosphoglycerate + ATP = (2R)-3-phospho-glyceroyl phosphate + ADP. The protein operates within carbohydrate degradation; glycolysis; pyruvate from D-glyceraldehyde 3-phosphate: step 2/5. This chain is Phosphoglycerate kinase, found in Wolinella succinogenes (strain ATCC 29543 / DSM 1740 / CCUG 13145 / JCM 31913 / LMG 7466 / NCTC 11488 / FDC 602W) (Vibrio succinogenes).